Reading from the N-terminus, the 428-residue chain is MARGLFSRAWLSKTHHFQARLSYIRVKYLFLTWLAVFVSSWVVYVQYSTYTELCRGRECKSIICDKYSKGIIDGSACSSLCEESKLYFGRCLSTKPNNQVYTGSWGDQDGVIKCQLSDVLHYELGEELEPKKEITLFEKPTRGTSVEKFKEMVASHLKAKVGEQANLSNLVSLILSVADSNKDGHISLPEAKSAWALLQLNEVLLAVVLQGREHTPKLLGFCGDLYVVERVPHAPLFGITLPWPMDLWIPAGMRRSMDQWFTPSWPRKAKIFIGLLELIEDIFHGTFGSFLMCDMRASSFGYTDRHDLRLVDGRRVVAEEAFKQAMILQRCKDHEDCVYGADCRTSCDLSEQRCTAEVAQPNLARACGAMKDYLLRGAPFHLQEELEKQLYACMALKGSAEQMEMEHSLILNNLKTLLWKQISHTTDS.

Over 1–27 the chain is Cytoplasmic; the sequence is MARGLFSRAWLSKTHHFQARLSYIRVK. The chain crosses the membrane as a helical span at residues 28 to 48; it reads YLFLTWLAVFVSSWVVYVQYS. Residues 49–428 lie on the Lumenal side of the membrane; it reads TYTELCRGRE…WKQISHTTDS (380 aa).

This sequence belongs to the DIPK family. In terms of processing, among the many cysteines in the lumenal domain, most are probably involved in disulfide bonds.

It is found in the endoplasmic reticulum membrane. This Danio rerio (Zebrafish) protein is Divergent protein kinase domain 1A (dipk1a).